A 458-amino-acid polypeptide reads, in one-letter code: Bifunctional protein GlmU (458 aa).

The tract at residues 1-229 is pyrophosphorylase; it reads MNKFAIVLAA…FDESLGVNDR (229 aa). UDP-N-acetyl-alpha-D-glucosamine-binding positions include 8-11, Lys-22, Gln-72, and 77-78; these read LAAG and GT. Residue Asp-102 coordinates Mg(2+). UDP-N-acetyl-alpha-D-glucosamine is bound by residues Gly-139, Glu-154, Asn-169, and Asn-227. Residue Asn-227 coordinates Mg(2+). The segment at 230-250 is linker; the sequence is VALSQAEATMRKRINHEHMVN. The tract at residues 251-458 is N-acetyltransferase; that stretch reads GVTLIDPATT…AKKMPHYRGQ (208 aa). Arg-332 and Lys-350 together coordinate UDP-N-acetyl-alpha-D-glucosamine. The active-site Proton acceptor is His-362. Residues Tyr-365 and Asn-376 each coordinate UDP-N-acetyl-alpha-D-glucosamine. Acetyl-CoA contacts are provided by Ala-379, Ser-404, Ala-422, and Arg-439.

It in the N-terminal section; belongs to the N-acetylglucosamine-1-phosphate uridyltransferase family. This sequence in the C-terminal section; belongs to the transferase hexapeptide repeat family. In terms of assembly, homotrimer. The cofactor is Mg(2+).

The protein resides in the cytoplasm. It carries out the reaction alpha-D-glucosamine 1-phosphate + acetyl-CoA = N-acetyl-alpha-D-glucosamine 1-phosphate + CoA + H(+). The enzyme catalyses N-acetyl-alpha-D-glucosamine 1-phosphate + UTP + H(+) = UDP-N-acetyl-alpha-D-glucosamine + diphosphate. Its pathway is nucleotide-sugar biosynthesis; UDP-N-acetyl-alpha-D-glucosamine biosynthesis; N-acetyl-alpha-D-glucosamine 1-phosphate from alpha-D-glucosamine 6-phosphate (route II): step 2/2. The protein operates within nucleotide-sugar biosynthesis; UDP-N-acetyl-alpha-D-glucosamine biosynthesis; UDP-N-acetyl-alpha-D-glucosamine from N-acetyl-alpha-D-glucosamine 1-phosphate: step 1/1. It functions in the pathway bacterial outer membrane biogenesis; LPS lipid A biosynthesis. Its function is as follows. Catalyzes the last two sequential reactions in the de novo biosynthetic pathway for UDP-N-acetylglucosamine (UDP-GlcNAc). The C-terminal domain catalyzes the transfer of acetyl group from acetyl coenzyme A to glucosamine-1-phosphate (GlcN-1-P) to produce N-acetylglucosamine-1-phosphate (GlcNAc-1-P), which is converted into UDP-GlcNAc by the transfer of uridine 5-monophosphate (from uridine 5-triphosphate), a reaction catalyzed by the N-terminal domain. The polypeptide is Bifunctional protein GlmU (Lactococcus lactis subsp. cremoris (strain MG1363)).